The following is a 364-amino-acid chain: Uroporphyrinogen decarboxylase (364 aa).

Residues 28-32, Asp78, Tyr160, Thr215, and His333 contribute to the substrate site; that span reads RQAGR.

This sequence belongs to the uroporphyrinogen decarboxylase family. As to quaternary structure, homodimer.

The protein resides in the cytoplasm. It catalyses the reaction uroporphyrinogen III + 4 H(+) = coproporphyrinogen III + 4 CO2. It functions in the pathway porphyrin-containing compound metabolism; protoporphyrin-IX biosynthesis; coproporphyrinogen-III from 5-aminolevulinate: step 4/4. Catalyzes the decarboxylation of four acetate groups of uroporphyrinogen-III to yield coproporphyrinogen-III. The polypeptide is Uroporphyrinogen decarboxylase (Burkholderia mallei (strain NCTC 10247)).